The chain runs to 348 residues: L-threonine 3-dehydrogenase (348 aa).

Cys38 contributes to the Zn(2+) binding site. Catalysis depends on charge relay system residues Thr40 and His43. Zn(2+) contacts are provided by His63, Glu64, Cys93, Cys96, Cys99, and Cys107. Residues Ile175, Asp195, Arg200, 263–265, and 287–288 contribute to the NAD(+) site; these read LGI and IY.

Belongs to the zinc-containing alcohol dehydrogenase family. As to quaternary structure, homotetramer. Zn(2+) serves as cofactor.

The protein localises to the cytoplasm. It carries out the reaction L-threonine + NAD(+) = (2S)-2-amino-3-oxobutanoate + NADH + H(+). It functions in the pathway amino-acid degradation; L-threonine degradation via oxydo-reductase pathway; glycine from L-threonine: step 1/2. Catalyzes the NAD(+)-dependent oxidation of L-threonine to 2-amino-3-ketobutyrate. The protein is L-threonine 3-dehydrogenase of Deinococcus radiodurans (strain ATCC 13939 / DSM 20539 / JCM 16871 / CCUG 27074 / LMG 4051 / NBRC 15346 / NCIMB 9279 / VKM B-1422 / R1).